A 278-amino-acid polypeptide reads, in one-letter code: Ras-related protein Rab-40B (278 aa).

Positions 23, 26, and 27 each coordinate GTP. A switch-I region spans residues 41-49 (SPYGHPAGI). Asp-69 provides a ligand contact to Mg(2+). Residues Gly-72, Asn-126, and Arg-127 each contribute to the GTP site. Residues 72 to 88 (GQGRFCTIFRSYSRGAQ) form a switch-II region. The SOCS box domain occupies 175–228 (LLRHGMDRLWRPSKVLSLQDLCCRAVVSCTPVHLVDKLPLPIALRSHLKSFSMA). The disordered stretch occupies residues 242–278 (SLTTSSTHKRSSLRKVKLVRPPQSPPKNCTRNSCKIS). Residues 248–259 (THKRSSLRKVKL) show a composition bias toward basic residues. Over residues 267-278 (PKNCTRNSCKIS) the composition is skewed to polar residues. The S-palmitoyl cysteine moiety is linked to residue Cys-270. Cys-275 is lipidated: S-geranylgeranyl cysteine.

It belongs to the small GTPase superfamily. Rab family. As to quaternary structure, component of the cullin-5-RING E3 ubiquitin-protein ligase complex (ECS(RAB40B) complex) composed of CUL5, Elongin BC (ELOB and ELOC), RNF7/RBX2 and RAB40B; RAB40B interaction with ECS complex is GTP-independent. Binds (GTP-bound) LIMA1; interaction promotes LIMA1 subcellular localization in lamellipodia during cell migration. Interacts (GTP-bound) with TKS5/SH3PXD2A (via PX domain); interaction promotes invadopodia-mediated extracellular matrix degradation. Mg(2+) is required as a cofactor.

The protein resides in the cell membrane. It localises to the cytoplasm. It is found in the cytosol. Its subcellular location is the cell projection. The protein localises to the lamellipodium membrane. The protein resides in the ruffle. The enzyme catalyses GTP + H2O = GDP + phosphate + H(+). The protein operates within protein modification; protein ubiquitination. With respect to regulation, regulated by guanine nucleotide exchange factors (GEFs) which promote the exchange of bound GDP for free GTP. Regulated by GTPase activating proteins (GAPs) which increase the GTP hydrolysis activity. Inhibited by GDP dissociation inhibitors (GDIs). Its function is as follows. RAB40B small GTPase acts as substrate-recognition components of the ECS(RAB40B) E3 ubiquitin ligase complex which mediates the ubiquitination of target proteins. The Rab40 subfamily belongs to the Rab family that are key regulators of intracellular membrane trafficking, from the formation of transport vesicles to their fusion with membranes. Rabs cycle between an inactive GDP-bound form and an active GTP-bound form that is able to recruit to membranes different sets of downstream effectors directly responsible for vesicle formation, movement, tethering and fusion. As part of the ECS(RAB40B) complex, GTP-bound RAB40B promotes LIMA1/EPLIN ubiquitination and degradation, thereby regulating leading-edge actin dynamics during cell migration. As part of the ECS(RAB40B) complex, GTP-bound RAB40B also ubiquitinates RAP2A GTPase which promotes its localization to lamellipodia and activation to drive cell migration. The ECS(RAB40B) complex does not mediate canonical ubiquitin-dependent degradation of RAP2. RAB40B also binds TKS5/SH3PXD2A effector independently from ECS complex to promote invadopodia-mediated extracellular matrix degradation. This is Ras-related protein Rab-40B from Homo sapiens (Human).